The sequence spans 488 residues: Capsid protein (488 aa).

Positions 80–93 (ISEDESDSGEEPEF) are enriched in acidic residues. The tract at residues 80–143 (ISEDESDSGE…QPKTIPGQKQ (64 aa)) is disordered. Basic and acidic residues predominate over residues 94–109 (EQVRMDRTGGTEIPKE). Residues 121–124 (RKRK) carry the Nuclear localization signal motif. The segment covering 134–143 (QPKTIPGQKQ) has biased composition (polar residues). Residues 410-427 (CRCWICNIEGHYANECPN) form a CCHC-type zinc finger. Residues 463-488 (YKEEEEETSTEESDDESSTSEDSDSD) form a disordered region. Residues 464–488 (KEEEEETSTEESDDESSTSEDSDSD) are compositionally biased toward acidic residues.

It belongs to the caulimoviridae capsid protein family. Interacts (via nuclear localization signal) with host importin alpha.

The protein localises to the virion. It is found in the host nucleus. Functionally, self assembles to form an icosahedral capsid, about 50 nm in diameter, nm, composed of 420 subunits of the viral capsid protein. The capsid encapsulates the genomic dsDNA. Following virus entry into host cell, provides nuclear import of the viral genome. Virus particles do not enter the nucleus, but dock at the nuclear membrane through the interaction with host importins. This chain is Capsid protein, found in Arabidopsis thaliana (Mouse-ear cress).